The primary structure comprises 401 residues: Phosphoglycerate kinase (401 aa).

Substrate is bound by residues 21–23 (DLN), Arg37, 60–63 (HLGR), Arg119, and Arg152. ATP-binding positions include Lys203, Glu325, and 351-354 (GGDT).

Belongs to the phosphoglycerate kinase family. As to quaternary structure, monomer.

The protein resides in the cytoplasm. The enzyme catalyses (2R)-3-phosphoglycerate + ATP = (2R)-3-phospho-glyceroyl phosphate + ADP. Its pathway is carbohydrate degradation; glycolysis; pyruvate from D-glyceraldehyde 3-phosphate: step 2/5. In Acidithiobacillus ferrooxidans (strain ATCC 23270 / DSM 14882 / CIP 104768 / NCIMB 8455) (Ferrobacillus ferrooxidans (strain ATCC 23270)), this protein is Phosphoglycerate kinase.